We begin with the raw amino-acid sequence, 98 residues long: Large ribosomal subunit protein uL23 (98 aa).

The protein belongs to the universal ribosomal protein uL23 family. Part of the 50S ribosomal subunit. Contacts protein L29, and trigger factor when it is bound to the ribosome.

One of the early assembly proteins it binds 23S rRNA. One of the proteins that surrounds the polypeptide exit tunnel on the outside of the ribosome. Forms the main docking site for trigger factor binding to the ribosome. The sequence is that of Large ribosomal subunit protein uL23 from Rickettsia typhi (strain ATCC VR-144 / Wilmington).